Consider the following 611-residue polypeptide: Protein ral2 (611 aa).

Kelch repeat units follow at residues 43–91 (EAFV…HSGD), 96–149 (KLIF…EVNG), and 175–224 (YLII…VINK). Position 604 is a phosphoserine (Ser-604).

Functionally, essential for mating and for recognition of the mating pheromone, and for the determination of cell shape. Implicated in activation of the ras1 protein. In Schizosaccharomyces pombe (strain 972 / ATCC 24843) (Fission yeast), this protein is Protein ral2 (ral2).